The primary structure comprises 422 residues: MSHYRAVKGTRDIFPDEVAAWQYVESVIHRVASFYAFHEIRTPVFEYTDLFQRSIGATTDIVGKEMFTFQPDPNGRSITLRPEMTAGVMRAFLQGNRASESPVHKLYYISNLFRKERPQAGRQRQFCQFGAELLGASSPAAVAEVIAMMMHVFRLLGLKGLKLRINTLGSIEDRKRYRDALREYLLPFSGELDAASLERLEKNPLRILDSKNPAVQSIVSGAPSLRDYLQPAAVEEFEEVLGYLDDRGIEYVQDPLLVRGLDYYCHTAFEVQCSDLGAQDALGGGGRYDGLARELGAGADLPAVGFAVGMERLMIALERQGLLSTIPPKGPDVYVVLQDRAFLVHAVALCGALRDAAISTEIDLAGRSMKAQMREANRIKAAYALFVGPDEVASGVYGLKNLESSSQESRSLEAVIAELGHG.

The protein belongs to the class-II aminoacyl-tRNA synthetase family. As to quaternary structure, homodimer.

The protein resides in the cytoplasm. The enzyme catalyses tRNA(His) + L-histidine + ATP = L-histidyl-tRNA(His) + AMP + diphosphate + H(+). In Prosthecochloris aestuarii (strain DSM 271 / SK 413), this protein is Histidine--tRNA ligase.